We begin with the raw amino-acid sequence, 343 residues long: Heat-inducible transcription repressor HrcA (343 aa).

This sequence belongs to the HrcA family.

Negative regulator of class I heat shock genes (grpE-dnaK-dnaJ and groELS operons). Prevents heat-shock induction of these operons. The polypeptide is Heat-inducible transcription repressor HrcA (Mycolicibacterium vanbaalenii (strain DSM 7251 / JCM 13017 / BCRC 16820 / KCTC 9966 / NRRL B-24157 / PYR-1) (Mycobacterium vanbaalenii)).